Here is a 137-residue protein sequence, read N- to C-terminus: Small heat shock protein IbpA (137 aa).

Residues 28-137 form the sHSP domain; that stretch reads SQSNGGYPPY…AKKPRRIEIN (110 aa).

The protein belongs to the small heat shock protein (HSP20) family. In terms of assembly, monomer. Forms homomultimers of about 100-150 subunits at optimal growth temperatures. Conformation changes to monomers at high temperatures or high ionic concentrations.

Its subcellular location is the cytoplasm. Its function is as follows. Associates with aggregated proteins, together with IbpB, to stabilize and protect them from irreversible denaturation and extensive proteolysis during heat shock and oxidative stress. Aggregated proteins bound to the IbpAB complex are more efficiently refolded and reactivated by the ATP-dependent chaperone systems ClpB and DnaK/DnaJ/GrpE. Its activity is ATP-independent. The polypeptide is Small heat shock protein IbpA (Shigella sonnei (strain Ss046)).